A 1243-amino-acid chain; its full sequence is Zinc finger protein ZFAT (1243 aa).

The segment at 12 to 35 (FMCKCCNLFSPNQSELLSHVSEKH) adopts a C2H2-type 1 zinc-finger fold. Disordered stretches follow at residues 51 to 116 (PLST…PSSL) and 147 to 189 (GEAG…GKEA). The span at 70–81 (MKRKRGRPKGST) shows a compositional bias: basic residues. The C2H2-type 2; degenerate zinc finger occupies 116–141 (LECSKCCRKFSNTRQLRKHICIIVLN). The segment covering 156-189 (ELEKKCKEDDREKASKRPRSQKTEKVQKISGKEA) has biased composition (basic and acidic residues). 7 C2H2-type zinc fingers span residues 271–293 (FTCE…LRIH), 299–321 (YKCP…LRKH), 326–349 (FACD…ERVH), 354–377 (QHCR…RDAH), 404–426 (YDCH…MLVH), 432–454 (FACE…VRKH), and 458–481 (YVCA…KEVH). Zn(2+) contacts are provided by cysteine 273, cysteine 276, histidine 289, histidine 293, cysteine 301, cysteine 304, histidine 317, histidine 321, cysteine 328, cysteine 331, histidine 344, histidine 349, cysteine 356, cysteine 359, histidine 372, histidine 377, cysteine 406, cysteine 409, histidine 422, and histidine 426. Zn(2+)-binding residues include cysteine 460, cysteine 463, histidine 476, and histidine 481. 3 disordered regions span residues 534 to 570 (EACP…AEST), 603 to 625 (TSSA…SSVQ), and 638 to 705 (AQSA…CKAA). Over residues 610–620 (AAPEKPPDMQH) the composition is skewed to basic and acidic residues. Polar residues predominate over residues 638-650 (AQSAGSDQESHGA). 10 C2H2-type zinc fingers span residues 742-764 (LECE…VRTH), 770-793 (YYCS…IQKH), 798-822 (LKCP…LKVH), 830-853 (YSCP…KTNH), 880-903 (MKCP…IWAH), 909-931 (FKCS…MNRH), 937-959 (HLCD…KLLH), 966-988 (FKCT…MEQH), 994-1017 (FRCA…NRKH), and 1041-1064 (LKCP…KNKH). Zn(2+) is bound by residues cysteine 772, cysteine 775, histidine 788, histidine 793, cysteine 800, cysteine 805, histidine 818, histidine 822, cysteine 832, cysteine 835, histidine 848, histidine 853, cysteine 882, cysteine 885, histidine 899, histidine 903, cysteine 911, cysteine 914, histidine 927, histidine 931, cysteine 939, cysteine 942, histidine 955, and leucine 958.

Isoform 1 is strongly expressed in placenta, spleen, kidney, testis and peripheral blood leukocytes. Expressed in CD4+ and CD8+ T-cells, CD19+ B-cells and CB14+ monocytes. Isoform 3 is strongly expressed in placenta, ovary, tonsil, CD19+ B-cells and CD14+ monocytes.

The protein resides in the nucleus. It is found in the cytoplasm. It localises to the cytosol. May be involved in transcriptional regulation. Overexpression causes down-regulation of a number of genes involved in the immune response. Some genes are also up-regulated. The protein is Zinc finger protein ZFAT (ZFAT) of Homo sapiens (Human).